The chain runs to 368 residues: Ethanol acetyltransferase 1 (368 aa).

A mitochondrion-targeting transit peptide spans 1-21 (MFLSLRPSLSVSRLAVVRRAY). The AB hydrolase-1 domain occupies 67 to 171 (PIIFFHGLLG…IIDNAPEPQP (105 aa)). Active-site charge relay system residues include S140, D164, and H315. Residues 344–368 (RNKDPNNYMQTQNSISNSDTMGQSL) form a disordered region. A compositionally biased stretch (polar residues) spans 348-368 (PNNYMQTQNSISNSDTMGQSL).

This sequence belongs to the AB hydrolase superfamily.

The protein resides in the mitochondrion. It catalyses the reaction ethanol + acetyl-CoA = ethyl acetate + CoA. The catalysed reaction is acetyl-CoA + H2O = acetate + CoA + H(+). The enzyme catalyses ethyl acetate + H2O = ethanol + acetate + H(+). Functionally, alcohol acetyltransferase that catalyzes the synthesis of ethyl acetate from ethanol and acetyl-CoA. Can also function as a thioesterase by hydrolyzing acetyl-CoA in the absence of ethanol, as well as esterase hydrolyzing ethyl acetate. The protein is Ethanol acetyltransferase 1 (EAT1) of Kluyveromyces lactis (strain ATCC 8585 / CBS 2359 / DSM 70799 / NBRC 1267 / NRRL Y-1140 / WM37) (Yeast).